The chain runs to 358 residues: Probable G-protein coupled receptor 25 (358 aa).

The Extracellular portion of the chain corresponds to Met-1 to Pro-43. The chain crosses the membrane as a helical span at residues Ala-44–Leu-64. The Cytoplasmic portion of the chain corresponds to Ser-65–Thr-76. A helical transmembrane segment spans residues Phe-77–Ala-97. The Extracellular segment spans residues Ala-98 to Lys-113. Residues Cys-112 and Cys-191 are joined by a disulfide bond. Residues Val-114 to Ser-134 traverse the membrane as a helical segment. Residues Val-135–Cys-155 are Cytoplasmic-facing. The helical transmembrane segment at Val-156 to Leu-176 threads the bilayer. The Extracellular portion of the chain corresponds to Tyr-177 to Gln-200. Residues Gly-201 to Cys-221 traverse the membrane as a helical segment. The Cytoplasmic segment spans residues Tyr-222–Ser-239. Residues Leu-240–Leu-260 traverse the membrane as a helical segment. At Arg-261–Trp-284 the chain is on the extracellular side. Residues Gly-285–Leu-307 traverse the membrane as a helical segment. The Cytoplasmic segment spans residues Asp-308–Trp-358. The segment at Asp-339 to Trp-358 is disordered.

It belongs to the G-protein coupled receptor 1 family.

It localises to the membrane. Functionally, orphan receptor. This Mus musculus (Mouse) protein is Probable G-protein coupled receptor 25 (Gpr25).